The primary structure comprises 352 residues: Nicotinate-nucleotide--dimethylbenzimidazole phosphoribosyltransferase (352 aa).

Residue Glu318 is the Proton acceptor of the active site.

This sequence belongs to the CobT family.

The catalysed reaction is 5,6-dimethylbenzimidazole + nicotinate beta-D-ribonucleotide = alpha-ribazole 5'-phosphate + nicotinate + H(+). Its pathway is nucleoside biosynthesis; alpha-ribazole biosynthesis; alpha-ribazole from 5,6-dimethylbenzimidazole: step 1/2. Functionally, catalyzes the synthesis of alpha-ribazole-5'-phosphate from nicotinate mononucleotide (NAMN) and 5,6-dimethylbenzimidazole (DMB). In Azotobacter vinelandii (strain DJ / ATCC BAA-1303), this protein is Nicotinate-nucleotide--dimethylbenzimidazole phosphoribosyltransferase.